The following is a 293-amino-acid chain: MARPPRQHPGVWASLLLLLLTGPAACAASPADDGAGPGGRGPRGRARGDTGADEAVPRHDSSYGTFAGEFYDLRYLSEEGYPFPTAPPVDPFAKIKVDDCGKTKGCFRYGKPGCNAETCDYFLSYRMIGADVEFELSADTDGWVAVGFSSDKKMGGDDVMACVHDDNGRVRIQHFYNVGQWAKEIQRNPARDEEGVFENNRVTCRFKRPVNVPRDETIVDLHLSWYYLFAWGPAIQGSITRHDIDSPPASERVVSIYKYEDIFMPSAAYQTFSSPFCLLLIVALTFYLLMGTP.

The N-terminal stretch at 1–28 (MARPPRQHPGVWASLLLLLLTGPAACAA) is a signal peptide. The interval 29–61 (SPADDGAGPGGRGPRGRARGDTGADEAVPRHDS) is disordered. Positions 46 to 61 (ARGDTGADEAVPRHDS) are enriched in basic and acidic residues. The DOMON domain maps to 119–234 (CDYFLSYRMI…WYYLFAWGPA (116 aa)). The helical transmembrane segment at 271–291 (TFSSPFCLLLIVALTFYLLMG) threads the bilayer.

As to quaternary structure, component of the outer core of AMPAR complex. AMPAR complex consists of an inner core made of 4 pore-forming GluA/GRIA proteins (GRIA1, GRIA2, GRIA3 and GRIA4) and 4 major auxiliary subunits arranged in a twofold symmetry. One of the two pairs of distinct binding sites is occupied either by CNIH2, CNIH3 or CACNG2, CACNG3. The other harbors CACNG2, CACNG3, CACNG4, CACNG8 or GSG1L. This inner core of AMPAR complex is complemented by outer core constituents binding directly to the GluA/GRIA proteins at sites distinct from the interaction sites of the inner core constituents. Outer core constituents include at least PRRT1, PRRT2, CKAMP44/SHISA9, FRRS1L and NRN1. The proteins of the inner and outer core serve as a platform for other, more peripherally associated AMPAR constituents. Alone or in combination, these auxiliary subunits control the gating and pharmacology of the AMPAR complex and profoundly impact their biogenesis and protein processing. Expressed in adult and fetal brain. Very weak expression in medulla, spinal cord and in adult ovary.

The protein resides in the cell membrane. It is found in the synapse. Its function is as follows. Important modulator of glutamate signaling pathway. The polypeptide is DOMON domain-containing protein FRRS1L (FRRS1L) (Homo sapiens (Human)).